A 156-amino-acid chain; its full sequence is Ribosomal RNA large subunit methyltransferase H (156 aa).

Residues Leu-73, Gly-104, and 123-128 (LSAMTL) each bind S-adenosyl-L-methionine.

This sequence belongs to the RNA methyltransferase RlmH family. In terms of assembly, homodimer.

It localises to the cytoplasm. The catalysed reaction is pseudouridine(1915) in 23S rRNA + S-adenosyl-L-methionine = N(3)-methylpseudouridine(1915) in 23S rRNA + S-adenosyl-L-homocysteine + H(+). Its function is as follows. Specifically methylates the pseudouridine at position 1915 (m3Psi1915) in 23S rRNA. The sequence is that of Ribosomal RNA large subunit methyltransferase H from Laribacter hongkongensis (strain HLHK9).